A 64-amino-acid polypeptide reads, in one-letter code: Small ribosomal subunit protein eS17 (64 aa).

Belongs to the eukaryotic ribosomal protein eS17 family.

In Halorubrum lacusprofundi (strain ATCC 49239 / DSM 5036 / JCM 8891 / ACAM 34), this protein is Small ribosomal subunit protein eS17.